We begin with the raw amino-acid sequence, 300 residues long: NAD kinase (300 aa).

Residue D77 is the Proton acceptor of the active site. Residues 77–78, 151–152, H162, R179, D181, and 192–197 each bind NAD(+); these read DG, ND, and TAYSLS.

This sequence belongs to the NAD kinase family. A divalent metal cation is required as a cofactor.

Its subcellular location is the cytoplasm. It catalyses the reaction NAD(+) + ATP = ADP + NADP(+) + H(+). Functionally, involved in the regulation of the intracellular balance of NAD and NADP, and is a key enzyme in the biosynthesis of NADP. Catalyzes specifically the phosphorylation on 2'-hydroxyl of the adenosine moiety of NAD to yield NADP. The chain is NAD kinase from Cellvibrio japonicus (strain Ueda107) (Pseudomonas fluorescens subsp. cellulosa).